Consider the following 314-residue polypeptide: Probable carboxylesterase 2 (314 aa).

Positions 79 to 81 match the Involved in the stabilization of the negatively charged intermediate by the formation of the oxyanion hole motif; the sequence is HGG. Residues Ser-158, Asp-254, and His-286 contribute to the active site.

It belongs to the 'GDXG' lipolytic enzyme family. Expressed in roots and flowers.

It catalyses the reaction a carboxylic ester + H2O = an alcohol + a carboxylate + H(+). Carboxylesterase acting on esters with varying acyl chain length. The polypeptide is Probable carboxylesterase 2 (CXE2) (Arabidopsis thaliana (Mouse-ear cress)).